Here is a 185-residue protein sequence, read N- to C-terminus: Peptidyl-tRNA hydrolase (185 aa).

Tyr-14 lines the tRNA pocket. His-19 serves as the catalytic Proton acceptor. The tRNA site is built by Tyr-65, Asn-67, and Asn-113.

It belongs to the PTH family. As to quaternary structure, monomer.

The protein localises to the cytoplasm. The catalysed reaction is an N-acyl-L-alpha-aminoacyl-tRNA + H2O = an N-acyl-L-amino acid + a tRNA + H(+). Hydrolyzes ribosome-free peptidyl-tRNAs (with 1 or more amino acids incorporated), which drop off the ribosome during protein synthesis, or as a result of ribosome stalling. In terms of biological role, catalyzes the release of premature peptidyl moieties from peptidyl-tRNA molecules trapped in stalled 50S ribosomal subunits, and thus maintains levels of free tRNAs and 50S ribosomes. This Rickettsia conorii (strain ATCC VR-613 / Malish 7) protein is Peptidyl-tRNA hydrolase.